The sequence spans 376 residues: N-acetyldiaminopimelate deacetylase (376 aa).

The active site involves D69. The active-site Proton acceptor is E128.

The protein belongs to the peptidase M20A family. N-acetyldiaminopimelate deacetylase subfamily.

The enzyme catalyses N-acetyl-(2S,6S)-2,6-diaminopimelate + H2O = (2S,6S)-2,6-diaminopimelate + acetate. Its pathway is amino-acid biosynthesis; L-lysine biosynthesis via DAP pathway; LL-2,6-diaminopimelate from (S)-tetrahydrodipicolinate (acetylase route): step 3/3. In terms of biological role, catalyzes the conversion of N-acetyl-diaminopimelate to diaminopimelate and acetate. This chain is N-acetyldiaminopimelate deacetylase, found in Bacillus cereus (strain B4264).